Consider the following 743-residue polypeptide: Dynein regulatory complex protein 1 homolog (743 aa).

Acidic residues-rich tracts occupy residues 1–10 and 19–28; these read MDDNEDELEE and SVEEEEEVEP. The tract at residues 1-34 is disordered; it reads MDDNEDELEEHQELVSDGSVEEEEEVEPDLGPVD. Coiled coils occupy residues 175 to 332 and 395 to 416; these read DQIE…VLMN and KLHSNINDMESKAHQARLNNRE. A disordered region spans residues 599–620; the sequence is NRLQGAAGGQPDEKEHRSTGDT. Positions 715–742 form a coiled coil; that stretch reads KMRVQYDAEVVFLRRQNEELRHLLQKFT.

The protein belongs to the DRC1 family.

This Drosophila melanogaster (Fruit fly) protein is Dynein regulatory complex protein 1 homolog.